A 660-amino-acid chain; its full sequence is Rhamnogalacturonate lyase B (660 aa).

The signal sequence occupies residues 1–18; the sequence is MRLGVCFSLAAAASVARA. Residues Asn25, Asn109, Asn142, and Asn284 are each glycosylated (N-linked (GlcNAc...) asparagine). The segment at 446-466 is disordered; it reads RLGTPDKSSGEFRHGAARDPT. A compositionally biased stretch (basic and acidic residues) spans 453 to 466; it reads SSGEFRHGAARDPT. 3 N-linked (GlcNAc...) asparagine glycosylation sites follow: Asn524, Asn566, and Asn635.

The protein belongs to the polysaccharide lyase 4 family.

It localises to the secreted. The enzyme catalyses Endotype eliminative cleavage of L-alpha-rhamnopyranosyl-(1-&gt;4)-alpha-D-galactopyranosyluronic acid bonds of rhamnogalacturonan I domains in ramified hairy regions of pectin leaving L-rhamnopyranose at the reducing end and 4-deoxy-4,5-unsaturated D-galactopyranosyluronic acid at the non-reducing end.. In terms of biological role, pectinolytic enzymes consist of four classes of enzymes: pectin lyase, polygalacturonase, pectin methylesterase and rhamnogalacturonase. Degrades the rhamnogalacturonan I (RG-I) backbone of pectin. Active against linseed rhamnogalacturonan. This chain is Rhamnogalacturonate lyase B (rglB), found in Emericella nidulans (strain FGSC A4 / ATCC 38163 / CBS 112.46 / NRRL 194 / M139) (Aspergillus nidulans).